The primary structure comprises 202 residues: Ribonuclease HII (202 aa).

The RNase H type-2 domain maps to Lys-13 to Phe-202. Residues Asp-19, Glu-20, and Asp-112 each coordinate a divalent metal cation.

This sequence belongs to the RNase HII family. Requires Mn(2+) as cofactor. Mg(2+) is required as a cofactor.

It is found in the cytoplasm. The catalysed reaction is Endonucleolytic cleavage to 5'-phosphomonoester.. Its function is as follows. Endonuclease that specifically degrades the RNA of RNA-DNA hybrids. In Cytophaga hutchinsonii (strain ATCC 33406 / DSM 1761 / CIP 103989 / NBRC 15051 / NCIMB 9469 / D465), this protein is Ribonuclease HII.